The chain runs to 274 residues: NADPH-dependent 7-cyano-7-deazaguanine reductase (274 aa).

Residue valine 80–serine 82 coordinates substrate. Position 82 to 83 (serine 82 to lysine 83) interacts with NADPH. Cysteine 181 functions as the Thioimide intermediate in the catalytic mechanism. Aspartate 188 functions as the Proton donor in the catalytic mechanism. Histidine 220–glutamate 221 is a substrate binding site. Arginine 249–glycine 250 contacts NADPH.

The protein belongs to the GTP cyclohydrolase I family. QueF type 2 subfamily. Homodimer.

Its subcellular location is the cytoplasm. The catalysed reaction is 7-aminomethyl-7-carbaguanine + 2 NADP(+) = 7-cyano-7-deazaguanine + 2 NADPH + 3 H(+). It functions in the pathway tRNA modification; tRNA-queuosine biosynthesis. In terms of biological role, catalyzes the NADPH-dependent reduction of 7-cyano-7-deazaguanine (preQ0) to 7-aminomethyl-7-deazaguanine (preQ1). The chain is NADPH-dependent 7-cyano-7-deazaguanine reductase from Burkholderia lata (strain ATCC 17760 / DSM 23089 / LMG 22485 / NCIMB 9086 / R18194 / 383).